A 293-amino-acid chain; its full sequence is 4-diphosphocytidyl-2-C-methyl-D-erythritol kinase (293 aa).

K16 is a catalytic residue. 99–109 serves as a coordination point for ATP; sequence PMGAGLGGGSS. D141 is an active-site residue.

The protein belongs to the GHMP kinase family. IspE subfamily.

It catalyses the reaction 4-CDP-2-C-methyl-D-erythritol + ATP = 4-CDP-2-C-methyl-D-erythritol 2-phosphate + ADP + H(+). It functions in the pathway isoprenoid biosynthesis; isopentenyl diphosphate biosynthesis via DXP pathway; isopentenyl diphosphate from 1-deoxy-D-xylulose 5-phosphate: step 3/6. Functionally, catalyzes the phosphorylation of the position 2 hydroxy group of 4-diphosphocytidyl-2C-methyl-D-erythritol. The polypeptide is 4-diphosphocytidyl-2-C-methyl-D-erythritol kinase (Burkholderia pseudomallei (strain 668)).